We begin with the raw amino-acid sequence, 310 residues long: Elongation factor Ts (310 aa).

The involved in Mg(2+) ion dislocation from EF-Tu stretch occupies residues 80–83 (TDFV).

This sequence belongs to the EF-Ts family.

Its subcellular location is the cytoplasm. Functionally, associates with the EF-Tu.GDP complex and induces the exchange of GDP to GTP. It remains bound to the aminoacyl-tRNA.EF-Tu.GTP complex up to the GTP hydrolysis stage on the ribosome. The sequence is that of Elongation factor Ts from Methylocella silvestris (strain DSM 15510 / CIP 108128 / LMG 27833 / NCIMB 13906 / BL2).